A 323-amino-acid polypeptide reads, in one-letter code: Dof zinc finger protein DOF3.6 (323 aa).

The Dof-type zinc finger occupies 76 to 130; that stretch reads LNCPRCDSTNTKFCYFNNYSLTQPRHFCKTCRRYWTRGGSLRNVPVGGGFRRNKR. Residues cysteine 78, cysteine 81, cysteine 103, and cysteine 106 each contribute to the Zn(2+) site. Disordered regions lie at residues 121–160 and 304–323; these read VGGG…SYSN and GGNS…HLSF. Residues 126 to 135 show a composition bias toward basic residues; the sequence is RRNKRSKSRS. Over residues 136 to 159 the composition is skewed to low complexity; sequence KSTVVVSTDNTTSTSSLTSRPSYS.

In terms of assembly, interacts with OBF4. As to expression, predominantly expressed in roots.

It localises to the nucleus. In terms of biological role, transcription factor that binds specifically to a 5'-AA[AG]G-3' consensus core sequence. Enhances the DNA binding of OBF transcription factors to OCS elements. This chain is Dof zinc finger protein DOF3.6 (DOF3.6), found in Arabidopsis thaliana (Mouse-ear cress).